A 582-amino-acid chain; its full sequence is Zinc finger protein 319 (582 aa).

Residues 1–14 show a composition bias toward low complexity; the sequence is MSESWQQPPQTQPQ. Positions 1–39 are disordered; the sequence is MSESWQQPPQTQPQQPQPPQPQHHAEPPPALAEHTLPPG. The C2H2-type 1 zinc-finger motif lies at 76-100; sequence PKCGVCGHDLAHLSSPHEHQCLAGH. Residues 104 to 126 form a C2H2-type 2; degenerate zinc finger; sequence FQCTQCLKIFHQATDLLEHQCVQ. A Glycyl lysine isopeptide (Lys-Gly) (interchain with G-Cter in SUMO2) cross-link involves residue Lys-130. The C2H2-type 3 zinc finger occupies 132 to 154; that stretch reads FVCGVCKMGFSLLTSLAQHHSSH. A compositionally biased stretch (low complexity) spans 174–196; it reads EPATTAAPSLPAAPAPSTVTPAE. The segment at 174–198 is disordered; that stretch reads EPATTAAPSLPAAPAPSTVTPAEQA. 3 C2H2-type zinc fingers span residues 202–224, 230–252, and 258–280; these read YSCPICQKPFKHLSELSRHERIH, YKCTLCDKSFSQSSHLVHHKRTH, and YKCAVCEKTFKHRSHLVRHMYAH. At Ser-281 the chain carries Phosphoserine. A C2H2-type 7; degenerate zinc finger spans residues 287–309; the sequence is FRCNVCELHFKESSELLQHPCTP. C2H2-type zinc fingers lie at residues 315-337, 343-365, and 371-393; these read FRCGECQKAFKRPSDLRQHERTH, FKCDLCPMGFKQQYALMRHRRTH, and FKCGLCEKGFGQPSHLLYHQHVH. A C2H2-type 11; degenerate zinc finger spans residues 399 to 421; sequence FKCPVCQKGFDQSAELLRHKCLP. The C2H2-type 12 zinc-finger motif lies at 428–450; that stretch reads FKCPVCNKAYKRASALQKHQLAH. The C2H2-type 13; degenerate zinc-finger motif lies at 458–480; it reads LRCTLCERRFFSSSEFVQHRCDP. 3 consecutive C2H2-type zinc fingers follow at residues 486–508, 514–536, and 542–564; these read LKCPDCEKRFKYASDLQRHRRVH, YKCPNCDKAFKQREHLNKHQGVH, and FKCVWCGERFLDVALLQEHSAQH.

The protein belongs to the krueppel C2H2-type zinc-finger protein family.

It is found in the nucleus. May be involved in transcriptional regulation. The chain is Zinc finger protein 319 (ZNF319) from Homo sapiens (Human).